The primary structure comprises 260 residues: UPF0758 protein Smed_1459 (260 aa).

The 123-residue stretch at 138–260 (VLSSWSAVID…HVSLKGLQLF (123 aa)) folds into the MPN domain. Residues histidine 209, histidine 211, and aspartate 222 each coordinate Zn(2+). The JAMM motif signature appears at 209–222 (HNHPSGDPTPSCAD).

The protein belongs to the UPF0758 family.

This chain is UPF0758 protein Smed_1459, found in Sinorhizobium medicae (strain WSM419) (Ensifer medicae).